The sequence spans 401 residues: Inactive (1R,4R,5S)-(-)-guaia-6,10(14)-diene synthase (401 aa).

Residues 1–20 (MVKFDSGSESEMTNGDELHI) form a disordered region. Mg(2+) is bound by residues Asp-134 and Glu-139. The short motif at 134–138 (DDQFD) is the DDXXD motif element. Arg-242 serves as a coordination point for substrate. Ser-292 lines the Mg(2+) pocket. Residue Lys-295 coordinates substrate. Asp-296 is a binding site for Mg(2+). 375–376 (RY) is a substrate binding site.

It belongs to the terpene synthase family. The cofactor is Mg(2+).

The protein is Inactive (1R,4R,5S)-(-)-guaia-6,10(14)-diene synthase of Gibberella fujikuroi (strain CBS 195.34 / IMI 58289 / NRRL A-6831) (Bakanae and foot rot disease fungus).